A 466-amino-acid polypeptide reads, in one-letter code: Sucrose-6-phosphate hydrolase (466 aa).

Residues 38-41 (LLND), glutamine 57, 100-101 (YS), 159-160 (RD), and glutamate 218 contribute to the substrate site. Aspartate 41 is a catalytic residue.

It localises to the cytoplasm. The catalysed reaction is Hydrolysis of terminal non-reducing beta-D-fructofuranoside residues in beta-D-fructofuranosides.. It functions in the pathway glycan biosynthesis; sucrose metabolism. In terms of biological role, hydrolyzes sucrose and sucrose-6P, but fails to hydrolyze any of the phosphorylated isomers of sucrose and other phospho-D-glucosides, including maltose-6'P and trehalose-6P. This chain is Sucrose-6-phosphate hydrolase (scrB), found in Klebsiella pneumoniae.